The sequence spans 445 residues: Trigger factor (445 aa).

The 86-residue stretch at 166-251 folds into the PPIase FKBP-type domain; that stretch reads GDVVVVDFVG…AKALKRPVDV (86 aa).

It belongs to the FKBP-type PPIase family. Tig subfamily.

It is found in the cytoplasm. The enzyme catalyses [protein]-peptidylproline (omega=180) = [protein]-peptidylproline (omega=0). In terms of biological role, involved in protein export. Acts as a chaperone by maintaining the newly synthesized protein in an open conformation. Functions as a peptidyl-prolyl cis-trans isomerase. This chain is Trigger factor, found in Gluconacetobacter diazotrophicus (strain ATCC 49037 / DSM 5601 / CCUG 37298 / CIP 103539 / LMG 7603 / PAl5).